The following is a 1171-amino-acid chain: ATP-dependent helicase/deoxyribonuclease subunit B (1171 aa).

A UvrD-like helicase ATP-binding domain is found at 1–390 (MSLRFVIGRA…HPLVECIRSA (390 aa)). ATP is bound at residue 8–15 (GRAGSGKS). In terms of domain architecture, UvrD-like helicase C-terminal spans 281 to 587 (MEQPRFHSPA…QFANIPPSLD (307 aa)). Residues C805, C1129, C1132, and C1138 each contribute to the [4Fe-4S] cluster site.

The protein belongs to the helicase family. AddB/RexB type 1 subfamily. As to quaternary structure, heterodimer of AddA and AddB. It depends on Mg(2+) as a cofactor. The cofactor is [4Fe-4S] cluster.

Its function is as follows. The heterodimer acts as both an ATP-dependent DNA helicase and an ATP-dependent, dual-direction single-stranded exonuclease. Recognizes the chi site generating a DNA molecule suitable for the initiation of homologous recombination. The AddB subunit has 5' -&gt; 3' nuclease activity but not helicase activity. In Bacillus cereus (strain ATCC 10987 / NRS 248), this protein is ATP-dependent helicase/deoxyribonuclease subunit B.